The sequence spans 391 residues: MEPLRALELYSGIGGMHQALRESCIPAQVVAAVDVNTVANEVYKYNFPHTQLLAKTIEGITLEEFDRLSFNMILMSPPCQPFTRIGLQGDVTDPRTNSFLHILDILPRLQKLPKYILLENVKGFEMSSTRDLLIQTIENCGFQYQEFLLSPTSLGIPNSRLRYFLIAKLQPEPFPFQAPGQVLMEFPKTESEHPPKYAINAEKKTEEKKTGPKICFDSSTQCSGKEAILFKLETAGEIDRKHQQDSDLSVRMLKDFLEDDIDKHSFFLPPKSLLRYALLLDIVKPTSRRSMCFTKGYGRYIEGTGSVLQTTEDVQIENIYKSLTSLSQEEKIMRLSMLQLRFFTPKEIANLLGFPPEFGFPEMTTVKQRYRLLGNSLNVHVVAKLIKILCD.

The SAM-dependent MTase C5-type domain maps to 4–391; sequence LRALELYSGI…VAKLIKILCD (388 aa). Residues 13–15, D34, 57–58, and S76 contribute to the S-adenosyl-L-methionine site; these read IGG and IE. C79 is an active-site residue. S376 lines the S-adenosyl-L-methionine pocket.

The protein belongs to the class I-like SAM-binding methyltransferase superfamily. C5-methyltransferase family.

It is found in the cytoplasm. The catalysed reaction is cytidine(38) in tRNA + S-adenosyl-L-methionine = 5-methylcytidine(38) in tRNA + S-adenosyl-L-homocysteine + H(+). Functionally, specifically methylates cytosine 38 in the anticodon loop of tRNA(Asp). Has higher activity on tRNA(Asp) modified with queuosine at position 34. This Bos taurus (Bovine) protein is tRNA (cytosine(38)-C(5))-methyltransferase (TRDMT1).